The following is a 182-amino-acid chain: NADH-quinone oxidoreductase subunit I (182 aa).

2 consecutive 4Fe-4S ferredoxin-type domains span residues 52–82 (LTRD…LQKA) and 92–121 (DFFR…LTPD). 8 residues coordinate [4Fe-4S] cluster: C62, C65, C68, C72, C101, C104, C107, and C111.

Belongs to the complex I 23 kDa subunit family. As to quaternary structure, NDH-1 is composed of 13 different subunits. Subunits NuoA, H, J, K, L, M, N constitute the membrane sector of the complex. [4Fe-4S] cluster serves as cofactor.

It localises to the cell inner membrane. It catalyses the reaction a quinone + NADH + 5 H(+)(in) = a quinol + NAD(+) + 4 H(+)(out). Functionally, NDH-1 shuttles electrons from NADH, via FMN and iron-sulfur (Fe-S) centers, to quinones in the respiratory chain. The immediate electron acceptor for the enzyme in this species is believed to be ubiquinone. Couples the redox reaction to proton translocation (for every two electrons transferred, four hydrogen ions are translocated across the cytoplasmic membrane), and thus conserves the redox energy in a proton gradient. The protein is NADH-quinone oxidoreductase subunit I of Pseudomonas savastanoi pv. phaseolicola (strain 1448A / Race 6) (Pseudomonas syringae pv. phaseolicola (strain 1448A / Race 6)).